The sequence spans 243 residues: Exosome complex component Rrp41 (243 aa).

Belongs to the RNase PH family. Rrp41 subfamily. Component of the archaeal exosome complex. Forms a hexameric ring-like arrangement composed of 3 Rrp41-Rrp42 heterodimers. The hexameric ring associates with a trimer of Rrp4 and/or Csl4 subunits.

The protein resides in the cytoplasm. Functionally, catalytic component of the exosome, which is a complex involved in RNA degradation. Has 3'-&gt;5' exoribonuclease activity. Can also synthesize heteromeric RNA-tails. The sequence is that of Exosome complex component Rrp41 from Sulfurisphaera tokodaii (strain DSM 16993 / JCM 10545 / NBRC 100140 / 7) (Sulfolobus tokodaii).